The sequence spans 893 residues: Translation initiation factor IF-2 (893 aa).

Disordered regions lie at residues Lys51–Glu203 and Glu216–Gln299. 3 stretches are compositionally biased toward basic and acidic residues: residues Ala102 to Glu203, Glu216 to Tyr238, and His245 to Pro261. The 170-residue stretch at Gly392–Thr561 folds into the tr-type G domain. Residues Gly401–Thr408 are G1. Residue Gly401–Thr408 coordinates GTP. A G2 region spans residues Gly426 to His430. A G3 region spans residues Asp447–Gly450. GTP-binding positions include Asp447–His451 and Asn501–Asp504. The segment at Asn501–Asp504 is G4. The interval Ser537–Lys539 is G5.

Belongs to the TRAFAC class translation factor GTPase superfamily. Classic translation factor GTPase family. IF-2 subfamily.

The protein resides in the cytoplasm. In terms of biological role, one of the essential components for the initiation of protein synthesis. Protects formylmethionyl-tRNA from spontaneous hydrolysis and promotes its binding to the 30S ribosomal subunits. Also involved in the hydrolysis of GTP during the formation of the 70S ribosomal complex. This is Translation initiation factor IF-2 from Aliivibrio fischeri (strain ATCC 700601 / ES114) (Vibrio fischeri).